Consider the following 249-residue polypeptide: Tumor necrosis factor ligand superfamily member 12 (249 aa).

At 1-21 the chain is on the cytoplasmic side; the sequence is MAARRSQRRRGRRGEPGTALL. A helical; Signal-anchor for type II membrane protein transmembrane segment spans residues 22 to 45; it reads APLVLSLGLALACLGLLLVVVSLG. The Extracellular portion of the chain corresponds to 46 to 249; that stretch reads SWATLSAQEP…LTYFGLFQVH (204 aa). A disordered region spans residues 52–78; sequence AQEPSQEELTAEDRREPPELNPQTEES. Residues 107–248 form the THD domain; sequence IAAHYEVHPR…FLTYFGLFQV (142 aa). The N-linked (GlcNAc...) asparagine glycan is linked to Asn139. Cys191 and Cys210 form a disulfide bridge.

This sequence belongs to the tumor necrosis factor family. Homotrimer. Interacts with the angiogenic factor AGGF1/VG5Q. In terms of processing, the soluble form is produced from the membrane form by proteolytic processing. As to expression, widely expressed.

It localises to the cell membrane. The protein localises to the secreted. Its function is as follows. Binds to FN14 and possibly also to TNRFSF12/APO3. Weak inducer of apoptosis in some cell types. Mediates NF-kappa-B activation. Promotes angiogenesis and the proliferation of endothelial cells. Also involved in induction of inflammatory cytokines. Promotes IL8 secretion. This Mus musculus (Mouse) protein is Tumor necrosis factor ligand superfamily member 12 (Tnfsf12).